A 697-amino-acid chain; its full sequence is Sialidase B (697 aa).

The first 29 residues, 1–29 (MNKRGLYSKLGISVVGISLLMGVPTLIHA), serve as a signal peptide directing secretion. Substrate is bound at residue arginine 245. Aspartate 270 acts as the Proton acceptor in catalysis. 3 BNR repeats span residues 280–291 (SYSDDNGKTWSE), 462–473 (TTSQNRGESWEQ), and 517–528 (LISDDSGQTWKK). The active site involves glutamate 541. Residue arginine 557 coordinates substrate. A BNR 4 repeat occupies 566-577 (MTSRDSGETWSK). Arginine 619 lines the substrate pocket. Tyrosine 653 serves as the catalytic Nucleophile.

This sequence belongs to the glycosyl hydrolase 33 family.

The catalysed reaction is Hydrolysis of alpha-(2-&gt;3)-, alpha-(2-&gt;6)-, alpha-(2-&gt;8)- glycosidic linkages of terminal sialic acid residues in oligosaccharides, glycoproteins, glycolipids, colominic acid and synthetic substrates.. The protein is Sialidase B (nanB) of Streptococcus pneumoniae serotype 4 (strain ATCC BAA-334 / TIGR4).